The sequence spans 128 residues: Gastrotropin (128 aa).

Alanine 2 carries the post-translational modification N-acetylalanine.

The protein belongs to the calycin superfamily. Fatty-acid binding protein (FABP) family. Predominantly expressed in ileum; also expressed in ovary.

It localises to the cytoplasm. Its subcellular location is the membrane. In terms of biological role, binds to bile acids and is involved in enterohepatic bile acid metabolism. Required for efficient apical to basolateral transport of conjugated bile acids in ileal enterocytes. Stimulates gastric acid and pepsinogen secretion. In Rattus norvegicus (Rat), this protein is Gastrotropin (Fabp6).